An 877-amino-acid polypeptide reads, in one-letter code: MNEQYSAMRGNVSMLGKLLGDTIKDALGEEILDRVETIRRLSKSSRAGNEASRQALLNTLQNLSNDELLPVARAFSQFLNLANVAEQYHRISPHGEAASNPDALYHLFTRLKNKNLDEAQIRQAVDNLSIELVLTAHPTEIARRTLIHKLVEVNTCLSQLDHDDLADYERHQIMRRLRQLVAQSWHTDEIRKNRPTPIDEAKWGYAVVENSLWEGVPAFLREFNEQLEKSLGYQLPVEAVPVRFTAWMGGDRDGNPNVTAEVTRRALLLSRWKAAELFLRDVQVLVSELSMTVCTPELRALAGEHTQEPYREVLKRLRQQLNNTLTYLDARLRGERLPRPADLLVSNDQLWQPLHTCYRSLKACGMGIIANGQLLDTLRRVHCFGVPLVRIDIRQESTRHTEALAELTRYLGLGDYETWSEEDKQTFLLRELNSKRPLVPRHWTPSPETKEVFDTCQVIAEAPAGAIAAYVISMARTPSDVLAVHLLLKEAGCPYNLPVVPLFETLDDLNNAEAVMTQLLSIDWYRGFIQGKQMVMIGYSDSAKDAGVMAASWAQYRAQEALVRVCDNAGIALTLFHGRGGSIGRGGAPAHDALLSQPPGSLKSGLRVTEQGEMIRFKLGLPEIAVSSLTLYTSAILEANLLPPPAPKQEWRDVMDELSQTSCALYRRYIRKNPDFVPYFRSATPELELGKLPLGSRPAKRRPSGGVESLRAIPWIFAWTQNRLMLPAWLGAGTALEEAMTEGHRGTLENMYRSWPFFTTRIDMLEMVFAKSDLWLAEYYDQRLVDPALWPLGTELRQQVQRDIQAVLTIADTDHLMADLPWAAESIALRNVYTDPLNVLQAELLYRSRHQEQPDANVEQALMVTIAGVAAGMRNTG.

Active-site residues include histidine 137 and lysine 544.

It belongs to the PEPCase type 1 family. Mg(2+) serves as cofactor.

It catalyses the reaction oxaloacetate + phosphate = phosphoenolpyruvate + hydrogencarbonate. Functionally, forms oxaloacetate, a four-carbon dicarboxylic acid source for the tricarboxylic acid cycle. This chain is Phosphoenolpyruvate carboxylase, found in Edwardsiella ictaluri (strain 93-146).